Here is a 397-residue protein sequence, read N- to C-terminus: LIM/homeobox protein Lhx9 (397 aa).

2 LIM zinc-binding domains span residues 69-130 and 131-193; these read ALCA…RFSV and QRCA…LLQG. Disordered stretches follow at residues 248–272, 330–365, and 378–397; these read ENEA…RMRT, ENGG…LTDL, and SNMD…TNLF. The segment at residues 267–326 is a DNA-binding region (homeobox); it reads TKRMRTSFKHHQLRTMKSYFAINHNPDAKDLKQLAQKTGLTKRVLQVWFQNARAKFRRNL. Positions 353–365 are enriched in low complexity; that stretch reads LTPPGTATTLTDL. Positions 387–397 are enriched in polar residues; the sequence is SPSQTTLTNLF.

In terms of assembly, interacts with LDB1 and LDB2. As to expression, expressed in the dorsal thalamus and inner nuclei of the cerebellum.

The protein localises to the nucleus. Functionally, involved in gonadal development. This Mus musculus (Mouse) protein is LIM/homeobox protein Lhx9 (Lhx9).